The following is a 663-amino-acid chain: NAD(P)H-quinone oxidoreductase subunit 5, chloroplastic (663 aa).

16 helical membrane passes run 11–31 (WLIP…LISF), 41–61 (LYGL…MNLL), 89–109 (FFID…AVLV), 126–146 (FFAY…SPNL), 149–169 (IYIF…FWFT), 189–209 (FCLL…DFIT), 224–244 (HLYF…AKSA), 260–280 (TPIS…FLVA), 292–312 (IMNL…TIAL), 329–349 (LGYM…FHLV), 398–418 (FTFL…CFWS), 436–456 (IAWI…LLAF), 482–502 (LYML…GFIS), 528–548 (ILLN…AYSI), 607–627 (WLFD…GQSL), and 635–655 (VSSY…FLPL).

The protein belongs to the complex I subunit 5 family. In terms of assembly, NDH is composed of at least 16 different subunits, 5 of which are encoded in the nucleus.

It is found in the plastid. It localises to the chloroplast thylakoid membrane. The catalysed reaction is a plastoquinone + NADH + (n+1) H(+)(in) = a plastoquinol + NAD(+) + n H(+)(out). It catalyses the reaction a plastoquinone + NADPH + (n+1) H(+)(in) = a plastoquinol + NADP(+) + n H(+)(out). Functionally, NDH shuttles electrons from NAD(P)H:plastoquinone, via FMN and iron-sulfur (Fe-S) centers, to quinones in the photosynthetic chain and possibly in a chloroplast respiratory chain. The immediate electron acceptor for the enzyme in this species is believed to be plastoquinone. Couples the redox reaction to proton translocation, and thus conserves the redox energy in a proton gradient. This is NAD(P)H-quinone oxidoreductase subunit 5, chloroplastic (ndhF) from Chara vulgaris (Common stonewort).